A 754-amino-acid chain; its full sequence is Protein neuralized (754 aa).

Residues 106 to 260 (PLQFHSVHGD…NCTGIEFLDS (155 aa)) enclose the NHR 1 domain. A compositionally biased stretch (low complexity) spans 280–297 (QQQQMPQPAANASSALNS). The disordered stretch occupies residues 280-308 (QQQQMPQPAANASSALNSHHPHQQSRRSL). A phosphoserine mark is found at S338 and S341. The NHR 2 domain occupies 368–523 (PVPFHNTKGR…STQSLRMFRQ (156 aa)). The RING-type zinc finger occupies 701–742 (CTICYENPIDSVLYMCGHMCMCYDCAIEQWRGVGGGQCPLCR).

It is found in the nucleus. In terms of biological role, involved in neurogenesis. Interacts with other neurogenic proteins in the specification of the neuroblast versus epidermoblast cell fate. The sequence is that of Protein neuralized (neur) from Drosophila melanogaster (Fruit fly).